The chain runs to 483 residues: ATP synthase subunit beta, chloroplastic (483 aa).

163-170 contacts ATP; it reads GGAGVGKT.

This sequence belongs to the ATPase alpha/beta chains family. As to quaternary structure, F-type ATPases have 2 components, CF(1) - the catalytic core - and CF(0) - the membrane proton channel. CF(1) has five subunits: alpha(3), beta(3), gamma(1), delta(1), epsilon(1). CF(0) has four main subunits: a(1), b(1), b'(1) and c(9-12).

The protein resides in the plastid. The protein localises to the chloroplast thylakoid membrane. It catalyses the reaction ATP + H2O + 4 H(+)(in) = ADP + phosphate + 5 H(+)(out). Its function is as follows. Produces ATP from ADP in the presence of a proton gradient across the membrane. The catalytic sites are hosted primarily by the beta subunits. The chain is ATP synthase subunit beta, chloroplastic from Ostreococcus tauri.